Consider the following 352-residue polypeptide: N-acetyl-gamma-glutamyl-phosphate reductase (352 aa).

Residue Cys156 is part of the active site.

The protein belongs to the NAGSA dehydrogenase family. Type 1 subfamily.

Its subcellular location is the cytoplasm. It carries out the reaction N-acetyl-L-glutamate 5-semialdehyde + phosphate + NADP(+) = N-acetyl-L-glutamyl 5-phosphate + NADPH + H(+). The protein operates within amino-acid biosynthesis; L-arginine biosynthesis; N(2)-acetyl-L-ornithine from L-glutamate: step 3/4. Functionally, catalyzes the NADPH-dependent reduction of N-acetyl-5-glutamyl phosphate to yield N-acetyl-L-glutamate 5-semialdehyde. This chain is N-acetyl-gamma-glutamyl-phosphate reductase, found in Rhodospirillum rubrum (strain ATCC 11170 / ATH 1.1.1 / DSM 467 / LMG 4362 / NCIMB 8255 / S1).